The sequence spans 306 residues: Oxygen-dependent coproporphyrinogen-III oxidase (306 aa).

Ser-93 lines the substrate pocket. Residues His-97 and His-107 each contribute to the a divalent metal cation site. The active-site Proton donor is the His-107. 109 to 111 lines the substrate pocket; it reads NVR. 2 residues coordinate a divalent metal cation: His-146 and His-176. Residues 241–276 form an important for dimerization region; the sequence is YVEYNLVYDRGTLFGLQSGGRTESILMSLPPQVAWG. Substrate is bound at residue 259 to 261; that stretch reads GGR.

Belongs to the aerobic coproporphyrinogen-III oxidase family. Homodimer. A divalent metal cation serves as cofactor.

The protein resides in the cytoplasm. The catalysed reaction is coproporphyrinogen III + O2 + 2 H(+) = protoporphyrinogen IX + 2 CO2 + 2 H2O. It functions in the pathway porphyrin-containing compound metabolism; protoporphyrin-IX biosynthesis; protoporphyrinogen-IX from coproporphyrinogen-III (O2 route): step 1/1. Involved in the heme biosynthesis. Catalyzes the aerobic oxidative decarboxylation of propionate groups of rings A and B of coproporphyrinogen-III to yield the vinyl groups in protoporphyrinogen-IX. This Stutzerimonas stutzeri (strain A1501) (Pseudomonas stutzeri) protein is Oxygen-dependent coproporphyrinogen-III oxidase.